A 320-amino-acid polypeptide reads, in one-letter code: Alpha/beta hydrolase domain-containing protein 17C (320 aa).

Residues arginine 50 to proline 75 form a disordered region. The segment covering alanine 55–glutamine 65 has biased composition (pro residues). Active-site charge relay system residues include serine 202, aspartate 267, and histidine 296.

The protein belongs to the AB hydrolase superfamily. ABHD17 family. Palmitoylated on cysteine residues located in a cysteine cluster at the N-terminus which promotes membrane localization. Palmitoylation is required for post-synaptic localization and for depalmitoylating activity towards DLG4/PSD95.

The protein localises to the recycling endosome membrane. The protein resides in the cell projection. It localises to the dendritic spine. Its subcellular location is the postsynaptic density membrane. The enzyme catalyses S-hexadecanoyl-L-cysteinyl-[protein] + H2O = L-cysteinyl-[protein] + hexadecanoate + H(+). Functionally, hydrolyzes fatty acids from S-acylated cysteine residues in proteins. Has depalmitoylating activity towards DLG4/PSD95. The sequence is that of Alpha/beta hydrolase domain-containing protein 17C from Mus musculus (Mouse).